Reading from the N-terminus, the 351-residue chain is Beta-hexosaminidase (351 aa).

Substrate-binding positions include Asp62, Arg70, Arg134, and 164–165; that span reads KH. The active-site Proton donor/acceptor is His177. Catalysis depends on Asp249, which acts as the Nucleophile.

The protein belongs to the glycosyl hydrolase 3 family. NagZ subfamily. Monomer.

Its subcellular location is the cytoplasm. It carries out the reaction Hydrolysis of terminal non-reducing N-acetyl-D-hexosamine residues in N-acetyl-beta-D-hexosaminides.. The protein operates within cell wall biogenesis; peptidoglycan recycling. Plays a role in peptidoglycan recycling by cleaving the terminal beta-1,4-linked N-acetylglucosamine (GlcNAc) from peptide-linked peptidoglycan fragments, giving rise to free GlcNAc, anhydro-N-acetylmuramic acid and anhydro-N-acetylmuramic acid-linked peptides. The protein is Beta-hexosaminidase of Pasteurella multocida (strain Pm70).